Consider the following 721-residue polypeptide: MAAATALDSLPAPLRSLRLKTKQQELLLRVSALALIYVLAFVVRLFSVLRYESMIHEFDPYFNYRTTLFLSDHGFSEFWNWFDFESWYPLGRVVGGTLFPGLMVTAALLHRLLRALSLAVHIREVCVLTAPFFAANTTLVAYAFGREIWDSGAGLVAAALIAVCPGYISRSVAGSYDNEGVAIFALLLTFYLFVRAVNTGSLAWSLASAFGYFYMVSAWGGYVFIINLLPLYVLVLLVTGRYSQRLYVAYNSTYVLGMLLAMQIRFVGFQHVQSGEHMAAMGVFFLLQVFFFLDWVKYLLNDAKLFKSFLRITLTCVITVGTLALGIGTASGYISPWTGRFYSLLDPTYAKDHIPIIASVSEHQPTAWSSFMFDFHILLFLFPAGLYFCFKRLSDATIFIVMYGLTSMYFAGVMVRLILVAAPAVCLISAIAASATIKNLTTLIRTKSKSPQTVSGKSSGSKAAAKGAVDQSLPFQQNVAIALLLGAFYLLSRYAVHCTWVTSEAYSSPSIVLAARGHNGGRVIFDDYREAYYWLRQNTPSDAKIMSWWDYGYQITAMGNRTVIVDNNTWNNTHIATVGRAMSSYEDEAYEIMQSLDVNYVLVVFGGVTGYSSDDINKFLWMVRIGGGVFPVIKEPDYLVNGEYRVDKGAAPKMLNCLMYKLCYYRFGELTTEYGKPPGYDRVRGVEIGNKDIKLEYLEEAFTTSNWIVRIYKVKPPKNRS.

The Cytoplasmic portion of the chain corresponds to 1-25; that stretch reads MAAATALDSLPAPLRSLRLKTKQQE. The chain crosses the membrane as a helical span at residues 26–46; it reads LLLRVSALALIYVLAFVVRLF. Over 47-129 the chain is Lumenal; sequence SVLRYESMIH…VHIREVCVLT (83 aa). The DXD motif 1 motif lies at 57–59; that stretch reads EFD. Residue Asp-59 coordinates Mn(2+). Residues 130–148 form a helical membrane-spanning segment; sequence APFFAANTTLVAYAFGREI. Residues 149-150 lie on the Cytoplasmic side of the membrane; it reads WD. The chain crosses the membrane as a helical span at residues 151 to 168; the sequence is SGAGLVAAALIAVCPGYI. At 169-179 the chain is on the lumenal side; that stretch reads SRSVAGSYDNE. Residues Asp-177 and Glu-179 each contribute to the Mn(2+) site. The DXD motif 2 motif lies at 177 to 179; that stretch reads DNE. The helical transmembrane segment at 180 to 199 threads the bilayer; sequence GVAIFALLLTFYLFVRAVNT. The Cytoplasmic segment spans residues 200-201; sequence GS. The chain crosses the membrane as a helical span at residues 202–216; that stretch reads LAWSLASAFGYFYMV. Residues 217–221 lie on the Lumenal side of the membrane; it reads SAWGG. A helical membrane pass occupies residues 222–238; sequence YVFIINLLPLYVLVLLV. Over 239–243 the chain is Cytoplasmic; the sequence is TGRYS. The helical transmembrane segment at 244-269 threads the bilayer; that stretch reads QRLYVAYNSTYVLGMLLAMQIRFVGF. The Lumenal portion of the chain corresponds to 270-277; the sequence is QHVQSGEH. Residues 278 to 297 traverse the membrane as a helical segment; sequence MAAMGVFFLLQVFFFLDWVK. Over 298-313 the chain is Cytoplasmic; it reads YLLNDAKLFKSFLRIT. Residues 314–334 form a helical membrane-spanning segment; that stretch reads LTCVITVGTLALGIGTASGYI. Residues 335 to 367 are Lumenal-facing; sequence SPWTGRFYSLLDPTYAKDHIPIIASVSEHQPTA. An SVSE motif motif is present at residues 359 to 362; the sequence is SVSE. Residues 368 to 390 traverse the membrane as a helical segment; that stretch reads WSSFMFDFHILLFLFPAGLYFCF. Topologically, residues 391–396 are cytoplasmic; it reads KRLSDA. A helical membrane pass occupies residues 397–413; that stretch reads TIFIVMYGLTSMYFAGV. The Lumenal portion of the chain corresponds to 414 to 417; sequence MVRL. Arg-416 lines the dolichyl diphosphooligosaccharide pocket. Residues 418–439 traverse the membrane as a helical segment; the sequence is ILVAAPAVCLISAIAASATIKN. Topologically, residues 440–471 are cytoplasmic; that stretch reads LTTLIRTKSKSPQTVSGKSSGSKAAAKGAVDQ. A helical membrane pass occupies residues 472 to 492; it reads SLPFQQNVAIALLLGAFYLLS. The Lumenal portion of the chain corresponds to 493-721; sequence RYAVHCTWVT…YKVKPPKNRS (229 aa). Residues 548–550 form an interacts with target acceptor peptide in protein substrate region; it reads WWD. The WWDYG motif signature appears at 548–552; sequence WWDYG. Tyr-553 lines the dolichyl diphosphooligosaccharide pocket. Asn-560 and Asn-567 each carry an N-linked (GlcNAc...) asparagine glycan. N-linked (GlcNAc...) (high mannose) asparagine glycosylation occurs at Asn-571. The DK motif signature appears at 615-622; sequence DINKFLWM.

It belongs to the STT3 family. In terms of assembly, component of the oligosaccharyltransferase (OST) complex. Mg(2+) serves as cofactor. The cofactor is Mn(2+).

It is found in the endoplasmic reticulum membrane. It catalyses the reaction a di-trans,poly-cis-dolichyl diphosphooligosaccharide + L-asparaginyl-[protein] = N(4)-(oligosaccharide-(1-&gt;4)-N-acetyl-beta-D-glucosaminyl-(1-&gt;4)-N-acetyl-beta-D-glucosaminyl)-L-asparaginyl-[protein] + a di-trans,poly-cis-dolichyl diphosphate + H(+). The protein operates within protein modification; protein glycosylation. In terms of biological role, catalytic subunit of the oligosaccharyl transferase (OST) complex that catalyzes the initial transfer of a defined glycan (Glc(3)Man(9)GlcNAc(2) in eukaryotes) from the lipid carrier dolichol-pyrophosphate to an asparagine residue within an Asn-X-Ser/Thr consensus motif in nascent polypeptide chains, the first step in protein N-glycosylation. N-glycosylation occurs cotranslationally and the complex associates with the Sec61 complex at the channel-forming translocon complex that mediates protein translocation across the endoplasmic reticulum (ER). All subunits are required for a maximal enzyme activity. This subunit contains the active site and the acceptor peptide and donor lipid-linked oligosaccharide (LLO) binding pockets. This Oryza sativa subsp. japonica (Rice) protein is Dolichyl-diphosphooligosaccharide--protein glycosyltransferase subunit STT3B (STT3B).